Reading from the N-terminus, the 112-residue chain is S-adenosylmethionine decarboxylase proenzyme (112 aa).

The active-site Schiff-base intermediate with substrate; via pyruvic acid is serine 62. Serine 62 carries the post-translational modification Pyruvic acid (Ser); by autocatalysis. Catalysis depends on histidine 67, which acts as the Proton acceptor; for processing activity. Catalysis depends on cysteine 82, which acts as the Proton donor; for catalytic activity.

Belongs to the prokaryotic AdoMetDC family. Type 1 subfamily. As to quaternary structure, heterotetramer of two alpha and two beta chains arranged as a dimer of alpha/beta heterodimers. Pyruvate is required as a cofactor. In terms of processing, is synthesized initially as an inactive proenzyme. Formation of the active enzyme involves a self-maturation process in which the active site pyruvoyl group is generated from an internal serine residue via an autocatalytic post-translational modification. Two non-identical subunits are generated from the proenzyme in this reaction, and the pyruvate is formed at the N-terminus of the alpha chain, which is derived from the carboxyl end of the proenzyme. The post-translation cleavage follows an unusual pathway, termed non-hydrolytic serinolysis, in which the side chain hydroxyl group of the serine supplies its oxygen atom to form the C-terminus of the beta chain, while the remainder of the serine residue undergoes an oxidative deamination to produce ammonia and the pyruvoyl group blocking the N-terminus of the alpha chain.

It catalyses the reaction S-adenosyl-L-methionine + H(+) = S-adenosyl 3-(methylsulfanyl)propylamine + CO2. It participates in amine and polyamine biosynthesis; S-adenosylmethioninamine biosynthesis; S-adenosylmethioninamine from S-adenosyl-L-methionine: step 1/1. Its function is as follows. Catalyzes the decarboxylation of S-adenosylmethionine to S-adenosylmethioninamine (dcAdoMet), the propylamine donor required for the synthesis of the polyamines spermine and spermidine from the diamine putrescine. This chain is S-adenosylmethionine decarboxylase proenzyme, found in Archaeoglobus fulgidus (strain ATCC 49558 / DSM 4304 / JCM 9628 / NBRC 100126 / VC-16).